Consider the following 79-residue polypeptide: CDC42 small effector protein 1 (79 aa).

Residues Cys10 and Cys11 are each lipidated (S-palmitoyl cysteine). A CRIB domain is found at 30–43; that stretch reads IGEPMNFVHLTHIG. The interval 41–79 is disordered; that stretch reads HIGSGDMGASDGLPRAGGVQEQMRSKCGRDRQWSNSGVL. Residues 63–72 are compositionally biased toward basic and acidic residues; that stretch reads MRSKCGRDRQ.

It belongs to the CDC42SE/SPEC family.

Its subcellular location is the cytoplasm. The protein resides in the cytoskeleton. It is found in the cell membrane. Probably involved in the organization of the actin cytoskeleton by acting downstream of CDC42, inducing actin filament assembly. The chain is CDC42 small effector protein 1 (cdc42se1) from Xenopus tropicalis (Western clawed frog).